The sequence spans 278 residues: 3-methyl-2-oxobutanoate hydroxymethyltransferase (278 aa).

Residues D43 and D82 each coordinate Mg(2+). Residues 43–44 (DS), D82, and K112 contribute to the 3-methyl-2-oxobutanoate site. E114 lines the Mg(2+) pocket. The active-site Proton acceptor is the E181.

It belongs to the PanB family. Homodecamer; pentamer of dimers. The cofactor is Mg(2+).

It is found in the cytoplasm. The enzyme catalyses 3-methyl-2-oxobutanoate + (6R)-5,10-methylene-5,6,7,8-tetrahydrofolate + H2O = 2-dehydropantoate + (6S)-5,6,7,8-tetrahydrofolate. It participates in cofactor biosynthesis; (R)-pantothenate biosynthesis; (R)-pantoate from 3-methyl-2-oxobutanoate: step 1/2. Functionally, catalyzes the reversible reaction in which hydroxymethyl group from 5,10-methylenetetrahydrofolate is transferred onto alpha-ketoisovalerate to form ketopantoate. The chain is 3-methyl-2-oxobutanoate hydroxymethyltransferase from Desulfitobacterium hafniense (strain Y51).